We begin with the raw amino-acid sequence, 193 residues long: Imidazoleglycerol-phosphate dehydratase (193 aa).

The protein belongs to the imidazoleglycerol-phosphate dehydratase family.

It localises to the cytoplasm. The catalysed reaction is D-erythro-1-(imidazol-4-yl)glycerol 3-phosphate = 3-(imidazol-4-yl)-2-oxopropyl phosphate + H2O. The protein operates within amino-acid biosynthesis; L-histidine biosynthesis; L-histidine from 5-phospho-alpha-D-ribose 1-diphosphate: step 6/9. The polypeptide is Imidazoleglycerol-phosphate dehydratase (Methanospirillum hungatei JF-1 (strain ATCC 27890 / DSM 864 / NBRC 100397 / JF-1)).